The chain runs to 1785 residues: 1,3-beta-glucan synthase component FKS3 (1785 aa).

Transmembrane regions (helical) follow at residues 337 to 357 (FWIIHFAPFWFFTTFNSPTLY), 375 to 395 (LSVIAFGGTIACLVQILATVF), 415 to 435 (IGLLFCLAINLGPSVYVLGFF), 444 to 464 (AYIVSIVQLIIAFLTTFFFAV), 508 to 528 (LWVFVYLAKYIESYFFLTLSL), 547 to 567 (YLLGPILCKWQAKITLVLMLL), 572 to 592 (LFFLDTYLWYIICNCIFSIVL), and 712 to 732 (LATPISEPVPVDCMPTFTVLV). 2 stretches are compositionally biased toward basic and acidic residues: residues 791 to 801 (ESSHDEDRLEI) and 815 to 824 (DHTESRKLPT). A disordered region spans residues 791 to 824 (ESSHDEDRLEIPDALYDPRSSPLSDHTESRKLPT). N-linked (GlcNAc...) asparagine glycans are attached at residues asparagine 844, asparagine 874, asparagine 955, asparagine 1002, and asparagine 1170. 3 helical membrane passes run 1215 to 1235 (LFISFSVQLFFVLLLNLGALN), 1268 to 1288 (VSIFVLSIFIVFFIAFAPLLI), and 1303 to 1323 (FLHHLLSMAPLFEVFVCQVYS). Asparagine 1360 is a glycosylation site (N-linked (GlcNAc...) asparagine). The next 5 membrane-spanning stretches (helical) occupy residues 1370 to 1390 (FFMLLFAIISMWQPALLWFWI), 1394 to 1414 (SMCFAPFIFNPHQFAFMDFFI), 1475 to 1495 (FAELFLPFCVFLFNFTAFSFI), 1514 to 1534 (LLVTFLPIFLNSIVLFLLFWV), and 1549 to 1569 (AGAVIAFIAHTFSVLVYLLDF). N-linked (GlcNAc...) asparagine glycosylation occurs at asparagine 1579. Helical transmembrane passes span 1585 to 1605 (ILLITCINMHLILFKVFTTIF), 1655 to 1675 (FFLGHFLLFIQTPIILLPFID), and 1713 to 1733 (FSLYFVMLGVLLFMLIAPFFA). Asparagine 1761 carries N-linked (GlcNAc...) asparagine glycosylation.

It belongs to the glycosyltransferase 48 family. N-glycosylated.

It localises to the mitochondrion. The protein resides in the membrane. The catalysed reaction is [(1-&gt;3)-beta-D-glucosyl](n) + UDP-alpha-D-glucose = [(1-&gt;3)-beta-D-glucosyl](n+1) + UDP + H(+). Its function is as follows. Required for spore wall assembly. This chain is 1,3-beta-glucan synthase component FKS3 (FKS3), found in Saccharomyces cerevisiae (strain ATCC 204508 / S288c) (Baker's yeast).